The following is a 193-amino-acid chain: Ribosome maturation factor RimM (193 aa).

The 82-residue stretch at 112 to 193 (VDEYYWIDLI…CITVDWGLDF (82 aa)) folds into the PRC barrel domain.

The protein belongs to the RimM family. Binds ribosomal protein uS19.

It is found in the cytoplasm. Functionally, an accessory protein needed during the final step in the assembly of 30S ribosomal subunit, possibly for assembly of the head region. Essential for efficient processing of 16S rRNA. May be needed both before and after RbfA during the maturation of 16S rRNA. It has affinity for free ribosomal 30S subunits but not for 70S ribosomes. This is Ribosome maturation factor RimM from Methylibium petroleiphilum (strain ATCC BAA-1232 / LMG 22953 / PM1).